The following is a 261-amino-acid chain: Kynurenine formamidase (261 aa).

Position 9 is a phosphoserine (Ser-9). Residues 36–40 carry the HGGXW motif; sequence HGGAW. Ser-110 functions as the Nucleophile in the catalytic mechanism. Residues Asp-211 and His-243 contribute to the active site.

Belongs to the kynurenine formamidase family. In terms of assembly, homodimer.

The catalysed reaction is N-formyl-L-kynurenine + H2O = L-kynurenine + formate + H(+). It participates in amino-acid degradation; L-tryptophan degradation via kynurenine pathway; L-kynurenine from L-tryptophan: step 2/2. In terms of biological role, catalyzes the hydrolysis of N-formyl-L-kynurenine to L-kynurenine, the second step in the kynurenine pathway of tryptophan degradation. Kynurenine may be further oxidized to nicotinic acid, NAD(H) and NADP(H). Required for elimination of toxic metabolites. This Saccharomyces cerevisiae (strain ATCC 204508 / S288c) (Baker's yeast) protein is Kynurenine formamidase.